The following is a 509-amino-acid chain: Glutamyl-tRNA(Gln) amidotransferase subunit A (509 aa).

Catalysis depends on charge relay system residues Lys75 and Ser150. Ser174 acts as the Acyl-ester intermediate in catalysis. A disordered region spans residues 471-509 (DWHKRRPPLGQPPLEQAQGTAQQPKAKSKSTKGSKKSKS). The segment covering 496–509 (AKSKSTKGSKKSKS) has biased composition (basic residues).

Belongs to the amidase family. GatA subfamily. As to quaternary structure, heterotrimer of A, B and C subunits.

The catalysed reaction is L-glutamyl-tRNA(Gln) + L-glutamine + ATP + H2O = L-glutaminyl-tRNA(Gln) + L-glutamate + ADP + phosphate + H(+). Its function is as follows. Allows the formation of correctly charged Gln-tRNA(Gln) through the transamidation of misacylated Glu-tRNA(Gln) in organisms which lack glutaminyl-tRNA synthetase. The reaction takes place in the presence of glutamine and ATP through an activated gamma-phospho-Glu-tRNA(Gln). In Synechococcus sp. (strain JA-3-3Ab) (Cyanobacteria bacterium Yellowstone A-Prime), this protein is Glutamyl-tRNA(Gln) amidotransferase subunit A.